Consider the following 126-residue polypeptide: Gas vesicle protein J (126 aa).

Belongs to the gas vesicle GvpA family. In terms of assembly, interacts with GvpA.

The protein resides in the gas vesicle. In terms of biological role, a minor component of the gas vesicle, might be involved in nucleating gas vesicle formation. Gas vesicles (GV) are hollow, gas filled proteinaceous nanostructures. During planktonic growth they allow positioning of the organism at a favorable depth for light or nutrient acquisition. The chain is Gas vesicle protein J from Pseudanabaena galeata (strain PCC 6901).